A 444-amino-acid chain; its full sequence is Glutamyl-tRNA reductase (444 aa).

Residues 49–52, S109, 114–116, and Q120 contribute to the substrate site; these read TCNR and ETQ. C50 (nucleophile) is an active-site residue. 189 to 194 contacts NADP(+); it reads GAGKMG.

The protein belongs to the glutamyl-tRNA reductase family. In terms of assembly, homodimer.

It catalyses the reaction (S)-4-amino-5-oxopentanoate + tRNA(Glu) + NADP(+) = L-glutamyl-tRNA(Glu) + NADPH + H(+). The protein operates within porphyrin-containing compound metabolism; protoporphyrin-IX biosynthesis; 5-aminolevulinate from L-glutamyl-tRNA(Glu): step 1/2. Functionally, catalyzes the NADPH-dependent reduction of glutamyl-tRNA(Glu) to glutamate 1-semialdehyde (GSA). The sequence is that of Glutamyl-tRNA reductase from Bacillus cereus (strain ZK / E33L).